We begin with the raw amino-acid sequence, 319 residues long: Ribosomal RNA small subunit methyltransferase H (319 aa).

S-adenosyl-L-methionine-binding positions include 52–54, aspartate 70, phenylalanine 100, aspartate 126, and glutamine 133; that span reads GGH. Positions 289–319 are disordered; it reads PKPLSPSELERQRNPRARSAKLRVAARSSQM.

This sequence belongs to the methyltransferase superfamily. RsmH family.

The protein localises to the cytoplasm. The enzyme catalyses cytidine(1402) in 16S rRNA + S-adenosyl-L-methionine = N(4)-methylcytidine(1402) in 16S rRNA + S-adenosyl-L-homocysteine + H(+). Functionally, specifically methylates the N4 position of cytidine in position 1402 (C1402) of 16S rRNA. In Synechococcus sp. (strain JA-2-3B'a(2-13)) (Cyanobacteria bacterium Yellowstone B-Prime), this protein is Ribosomal RNA small subunit methyltransferase H.